Reading from the N-terminus, the 248-residue chain is Probable transcriptional regulatory protein PP_1214 (248 aa).

The segment at 1-21 (MAGHSKWANIKHRKERQDAKR) is disordered.

It belongs to the TACO1 family.

It localises to the cytoplasm. The chain is Probable transcriptional regulatory protein PP_1214 from Pseudomonas putida (strain ATCC 47054 / DSM 6125 / CFBP 8728 / NCIMB 11950 / KT2440).